The primary structure comprises 225 residues: PKHD-type hydroxylase YbiX (225 aa).

Residues 78–177 form the Fe2OG dioxygenase domain; sequence TLSTPLFNRY…RVASFMWIQS (100 aa). His96, Asp98, and His158 together coordinate Fe cation. Position 168 (Arg168) interacts with 2-oxoglutarate.

Fe(2+) is required as a cofactor. L-ascorbate serves as cofactor.

This Escherichia coli (strain 55989 / EAEC) protein is PKHD-type hydroxylase YbiX.